Reading from the N-terminus, the 292-residue chain is Formamidopyrimidine-DNA glycosylase (292 aa).

Catalysis depends on proline 2, which acts as the Schiff-base intermediate with DNA. Residue glutamate 3 is the Proton donor of the active site. Lysine 58 (proton donor; for beta-elimination activity) is an active-site residue. 3 residues coordinate DNA: histidine 98, arginine 128, and arginine 173. Residues 258-292 (LVYDRAGQPCRVCATPVRQIVQGQRSTFYCPNCQH) form an FPG-type zinc finger. The Proton donor; for delta-elimination activity role is filled by arginine 282.

Belongs to the FPG family. Monomer. The cofactor is Zn(2+).

The enzyme catalyses Hydrolysis of DNA containing ring-opened 7-methylguanine residues, releasing 2,6-diamino-4-hydroxy-5-(N-methyl)formamidopyrimidine.. The catalysed reaction is 2'-deoxyribonucleotide-(2'-deoxyribose 5'-phosphate)-2'-deoxyribonucleotide-DNA = a 3'-end 2'-deoxyribonucleotide-(2,3-dehydro-2,3-deoxyribose 5'-phosphate)-DNA + a 5'-end 5'-phospho-2'-deoxyribonucleoside-DNA + H(+). Its function is as follows. Involved in base excision repair of DNA damaged by oxidation or by mutagenic agents. Acts as a DNA glycosylase that recognizes and removes damaged bases. Has a preference for oxidized purines, such as 7,8-dihydro-8-oxoguanine (8-oxoG). Has AP (apurinic/apyrimidinic) lyase activity and introduces nicks in the DNA strand. Cleaves the DNA backbone by beta-delta elimination to generate a single-strand break at the site of the removed base with both 3'- and 5'-phosphates. In Cupriavidus necator (strain ATCC 17699 / DSM 428 / KCTC 22496 / NCIMB 10442 / H16 / Stanier 337) (Ralstonia eutropha), this protein is Formamidopyrimidine-DNA glycosylase.